The following is a 332-amino-acid chain: Large ribosomal subunit protein mL44 (332 aa).

A mitochondrion-targeting transit peptide spans 1 to 30 (MASGLVRLLQQGHRCLLAPVAPKLVPPVRG). The RNase III domain occupies 86-228 (DLLKTAFVNS…LITQMTGKEL (143 aa)). Positions 236-306 (NPMGLLVEEL…ARVALRKLYG (71 aa)) constitute a DRBM domain.

Belongs to the ribonuclease III family. Mitochondrion-specific ribosomal protein mL44 subfamily. As to quaternary structure, component of the mitochondrial large ribosomal subunit (mt-LSU). Mature mammalian 55S mitochondrial ribosomes consist of a small (28S) and a large (39S) subunit. The 28S small subunit contains a 12S ribosomal RNA (12S mt-rRNA) and 30 different proteins. The 39S large subunit contains a 16S rRNA (16S mt-rRNA), a copy of mitochondrial valine transfer RNA (mt-tRNA(Val)), which plays an integral structural role, and 52 different proteins.

It is found in the mitochondrion. Functionally, component of the 39S subunit of mitochondrial ribosome. May have a function in the assembly/stability of nascent mitochondrial polypeptides exiting the ribosome. This Homo sapiens (Human) protein is Large ribosomal subunit protein mL44 (MRPL44).